The chain runs to 62 residues: Rubredoxin-2 (62 aa).

In terms of domain architecture, Rubredoxin-like spans 7–58 (MWRCQMVNCGYVYDPDRGDKRRKVPAGTKFEDLPEDWRCPVCGAGKKSFRRL). Residues cysteine 10, cysteine 15, cysteine 45, and cysteine 48 each contribute to the Fe cation site.

It belongs to the rubredoxin family. In terms of assembly, monomer. Requires Fe(3+) as cofactor.

Its function is as follows. Rubredoxin is a small nonheme, iron protein lacking acid-labile sulfide. Its single Fe, chelated to 4 Cys, functions as an electron acceptor and may also stabilize the conformation of the molecule. The chain is Rubredoxin-2 (rd2) from Desulfovibrio desulfuricans (strain ATCC 27774 / DSM 6949 / MB).